Here is a 638-residue protein sequence, read N- to C-terminus: Glucans biosynthesis glucosyltransferase H (638 aa).

Transmembrane regions (helical) follow at residues 60–82 (FYLI…AVMW), 97–119 (FMFL…FCVV), 415–437 (IGHY…IPLV), 464–486 (LWIF…FALL), 499–521 (LRVL…VVMY), and 578–600 (LAMW…ALTS).

Belongs to the glycosyltransferase 2 family. OpgH subfamily.

It is found in the cell inner membrane. It participates in glycan metabolism; osmoregulated periplasmic glucan (OPG) biosynthesis. Its function is as follows. Involved in the biosynthesis of osmoregulated periplasmic glucans (OPGs). In Xylella fastidiosa (strain 9a5c), this protein is Glucans biosynthesis glucosyltransferase H.